The primary structure comprises 256 residues: Imidazole glycerol phosphate synthase subunit HisF (256 aa).

Catalysis depends on residues aspartate 12 and aspartate 131.

The protein belongs to the HisA/HisF family. In terms of assembly, heterodimer of HisH and HisF.

It localises to the cytoplasm. The catalysed reaction is 5-[(5-phospho-1-deoxy-D-ribulos-1-ylimino)methylamino]-1-(5-phospho-beta-D-ribosyl)imidazole-4-carboxamide + L-glutamine = D-erythro-1-(imidazol-4-yl)glycerol 3-phosphate + 5-amino-1-(5-phospho-beta-D-ribosyl)imidazole-4-carboxamide + L-glutamate + H(+). It functions in the pathway amino-acid biosynthesis; L-histidine biosynthesis; L-histidine from 5-phospho-alpha-D-ribose 1-diphosphate: step 5/9. Functionally, IGPS catalyzes the conversion of PRFAR and glutamine to IGP, AICAR and glutamate. The HisF subunit catalyzes the cyclization activity that produces IGP and AICAR from PRFAR using the ammonia provided by the HisH subunit. In Pseudomonas fluorescens (strain SBW25), this protein is Imidazole glycerol phosphate synthase subunit HisF.